The sequence spans 698 residues: MSVQDVLWIVLTVQLSFGLAYFENNQRTQDYDVDKNGSVHHKNWVRNEMMDSLGLYWLKWWINANENSIYFEVTVHTRGFAGLGFSKDGRLARADMVLMWVDDATGHPNVLDCHGALHPSSGPPLQDDTQNYDVLDGKQNGTHTILKFKRKIETCDPFDIPLSADTFKVLWSIGENDPIHGNLDWQGQSRGVKALQLFSPMFTKNSHSIEGIQKWDITVNNVTIDRSMDTLYWCKIVRLPELTGKQHIIGYEPLLSGKYERNVVHHMTLFECQSKIYSGSDPSSWDLWVRSAGTVCNSNLLTPRDWDSCSTPVAVWSLGSDGQFLPPHAGIPMGGASGVSYYMLEIHYDNPDGKESVDHSGFRIHYTPNLRTYDSGILISGVSISETQLIPPGQKKYRSVGICGPSCSSVMFPKDGIKIISGTLHSHQAGRTISLRHVRSGKELNPIIVDENYDYRHQKVHQLANETVVLPGDYLITDCSYETKYRKRPTFGGYSTKEEMCLTFITYYPKIEMSGCYSMTPVREFFEMFRVYQFYSLNMTDVENMFLYNSDYTDYSKQAKNATNKPNSGKTSKEDVIYQESLLNKLVISDPAEFHDRTFLSHLNQLPWHDPLFTKRVEQAFITGTHMTFCRVSKDSLSIPSEIIRYPEFTAYVKPPAACLNYLFTDNEELRSGSSQFFTDFTLSLLLLIQLGLQTTLL.

An N-terminal signal peptide occupies residues 1–20 (MSVQDVLWIVLTVQLSFGLA). N-linked (GlcNAc...) asparagine glycans are attached at residues asparagine 36, asparagine 140, and asparagine 221. One can recognise a DOMON domain in the interval 54–174 (GLYWLKWWIN…DTFKVLWSIG (121 aa)). Tyrosine 232 is an active-site residue. Cu cation contacts are provided by histidine 265 and histidine 266. A disulfide bridge connects residues cysteine 272 and cysteine 309. Positions 347, 425, and 427 each coordinate Cu cation. 2 cysteine pairs are disulfide-bonded: cysteine 403-cysteine 516 and cysteine 479-cysteine 501. Histidine 425 is an active-site residue. A glycan (N-linked (GlcNAc...) asparagine) is linked at asparagine 465. Residue methionine 500 participates in Cu cation binding. Residues asparagine 538 and asparagine 561 are each glycosylated (N-linked (GlcNAc...) asparagine).

The protein belongs to the copper type II ascorbate-dependent monooxygenase family. It depends on Cu(2+) as a cofactor.

It localises to the secreted. In Drosophila melanogaster (Fruit fly), this protein is MOXD1 homolog 1.